Consider the following 134-residue polypeptide: Nif-regulating protein A (134 aa).

The segment at 3 to 36 (CLECGLVYIVSGLKVPEKISVRVFVNRIEHPFTH) adopts a C4-type; atypical zinc-finger fold.

As to quaternary structure, interacts with the general archaeal transcription factors TBPs.

In terms of biological role, involved in nitrogen regulation. Enhances the transcription of the nitrogen fixation (nif) operon under nitrogen-limited conditions. Acts by binding to the nifH promoter region. In Methanosarcina mazei (strain ATCC BAA-159 / DSM 3647 / Goe1 / Go1 / JCM 11833 / OCM 88) (Methanosarcina frisia), this protein is Nif-regulating protein A.